The sequence spans 145 residues: Functional amyloid chaperone FapA (145 aa).

A signal peptide spans 1-27 (MRKRDKRLYHLLLVGCVLGSLSLTAQA).

It belongs to the FapA family. In terms of assembly, monomer in solution. Interacts with FapC but not FapB in vitro.

Its subcellular location is the periplasm. In terms of biological role, an intrinsically disordered chaperone for fibril amyloid FapC that guards against fibrillation, pro within the periplasm. Upon overexpression of the endogenous six-gene locus (fapA-fapF), cells form large clumps during liquid growth, make large amounts of biofilm and produce relatively unstable amyloid fibrils. The sequence is that of Functional amyloid chaperone FapA from Pseudomonas putida (strain ATCC 700007 / DSM 6899 / JCM 31910 / BCRC 17059 / LMG 24140 / F1).